The following is a 279-amino-acid chain: MEAVGKHVKLFWNVYSDYAVLIAISLSYFVFDVLMLPFTRQFSLEDITISHPFALHEQVPTKYLGIICVFFPALVLYGFGKLRNNSLLFWKSLMGLLYSTMVCGLCVSLLKNAVGRPRPDFLARCQPFESTPKTGLVDVLSCSVPWSDKVLQDGFRSFPSGHTSFSFAGLGFLAIFLAGQLKMFRNKTSSWKVVVPLVPLSIASWIGLSRSQDYRHHKEDIAVGALFGFAIAYVVYRQLFPPLDHHNADILYVQAELDEGYTNVHSAGNSSATNAEQMV.

Over 1-17 (MEAVGKHVKLFWNVYSD) the chain is Lumenal. A helical membrane pass occupies residues 18–38 (YAVLIAISLSYFVFDVLMLPF). At 39–58 (TRQFSLEDITISHPFALHEQ) the chain is on the cytoplasmic side. The helical transmembrane segment at 59-79 (VPTKYLGIICVFFPALVLYGF) threads the bilayer. Residues 80-86 (GKLRNNS) lie on the Lumenal side of the membrane. The chain crosses the membrane as a helical span at residues 87 to 107 (LLFWKSLMGLLYSTMVCGLCV). Residues 108–163 (SLLKNAVGRPRPDFLARCQPFESTPKTGLVDVLSCSVPWSDKVLQDGFRSFPSGHT) lie on the Cytoplasmic side of the membrane. The interval 111–119 (KNAVGRPRP) is phosphatase sequence motif I. The tract at residues 159–162 (PSGH) is phosphatase sequence motif II. Residues 164 to 184 (SFSFAGLGFLAIFLAGQLKMF) form a helical membrane-spanning segment. Residues 185–187 (RNK) lie on the Lumenal side of the membrane. Residues 188 to 208 (TSSWKVVVPLVPLSIASWIGL) traverse the membrane as a helical segment. The Cytoplasmic segment spans residues 209 to 220 (SRSQDYRHHKED). A phosphatase sequence motif III region spans residues 209 to 220 (SRSQDYRHHKED). A helical membrane pass occupies residues 221-241 (IAVGALFGFAIAYVVYRQLFP). Residues 242-279 (PLDHHNADILYVQAELDEGYTNVHSAGNSSATNAEQMV) are Lumenal-facing.

Belongs to the PA-phosphatase related phosphoesterase family.

The protein localises to the vacuole membrane. It localises to the endoplasmic reticulum membrane. It catalyses the reaction a 1,2-diacyl-sn-glycerol 3-diphosphate + H2O = a 1,2-diacyl-sn-glycero-3-phosphate + phosphate + H(+). The catalysed reaction is a 1,2-diacyl-sn-glycero-3-phosphate + H2O = a 1,2-diacyl-sn-glycerol + phosphate. Catalyzes the dephosphorylation of diacylglycerol phosphate (DGPP) to phosphatidate (PA) and the subsequent dephosphorylation of PA to diacylglycerol (DAG). The chain is Probable diacylglycerol pyrophosphate phosphatase 1 (dpp1) from Schizosaccharomyces pombe (strain 972 / ATCC 24843) (Fission yeast).